Here is a 581-residue protein sequence, read N- to C-terminus: Potassium-transporting ATPase potassium-binding subunit (581 aa).

12 consecutive transmembrane segments (helical) span residues 2-22 (LQGWIQIALTILIIVAITPFF), 74-94 (AVIAILVFSLIAGQGVLPLNP), 135-155 (GLGYQMFTSAGTGLAVGIAFI), 177-197 (ILLPISIVGAIALIIAGVPET), 255-275 (LVQLVAILSIPTSLIYTYGVF), 284-304 (LIYLIPLGIFIGFTIITAIGE), 332-352 (WAQSALYAVTTTATMCGAVIA), 357-377 (LMPNGGFATLSNLFLQIVFGG), 381-401 (GTAYLFAYLILAVFVTGLMVG), 421-441 (FLILLVHPIAILIPGAIALAF), 501-521 (LSACFSLLAGRYIPIAALLLL), and 550-570 (AGVILILGALTFLPILALGPI).

This sequence belongs to the KdpA family. The system is composed of three essential subunits: KdpA, KdpB and KdpC.

It is found in the cell inner membrane. Its function is as follows. Part of the high-affinity ATP-driven potassium transport (or Kdp) system, which catalyzes the hydrolysis of ATP coupled with the electrogenic transport of potassium into the cytoplasm. This subunit binds the periplasmic potassium ions and delivers the ions to the membrane domain of KdpB through an intramembrane tunnel. This Microcystis aeruginosa (strain NIES-843 / IAM M-2473) protein is Potassium-transporting ATPase potassium-binding subunit.